The sequence spans 297 residues: MTEAIIIDGKEFSSNLRNKIAEDVKAFKKERNVVPGLAVVLVGEDPASRIYVRKKEEMTTAVGMNSLSYRLDANASQQELLDLIETLNHDPAVHGILVQLPLPKHIDTPTILEAIDPDKDVDGFHVVNAGRLAIGTPSLVPCTPAGCMMLLEHSLGSLKGKNALVIGRSTIVGRPMAQLLLAADCTVTVAHRHTKNLEELCRQADIVVAAVGIPHFVKASWLKPGAVVIDVGINRVPAEDEAAKAAGKTRIVGDVDFVEAAKVASAITPVPGGVGPMTIACLLNNTVQAARNLTSAS.

Residues 167–169 (GRS) and isoleucine 233 contribute to the NADP(+) site.

The protein belongs to the tetrahydrofolate dehydrogenase/cyclohydrolase family. Homodimer.

It catalyses the reaction (6R)-5,10-methylene-5,6,7,8-tetrahydrofolate + NADP(+) = (6R)-5,10-methenyltetrahydrofolate + NADPH. The catalysed reaction is (6R)-5,10-methenyltetrahydrofolate + H2O = (6R)-10-formyltetrahydrofolate + H(+). The protein operates within one-carbon metabolism; tetrahydrofolate interconversion. Functionally, catalyzes the oxidation of 5,10-methylenetetrahydrofolate to 5,10-methenyltetrahydrofolate and then the hydrolysis of 5,10-methenyltetrahydrofolate to 10-formyltetrahydrofolate. The protein is Bifunctional protein FolD of Zymomonas mobilis subsp. mobilis (strain ATCC 31821 / ZM4 / CP4).